Consider the following 130-residue polypeptide: Ribosome-binding factor A (130 aa).

Belongs to the RbfA family. Monomer. Binds 30S ribosomal subunits, but not 50S ribosomal subunits or 70S ribosomes.

Its subcellular location is the cytoplasm. One of several proteins that assist in the late maturation steps of the functional core of the 30S ribosomal subunit. Associates with free 30S ribosomal subunits (but not with 30S subunits that are part of 70S ribosomes or polysomes). Required for efficient processing of 16S rRNA. May interact with the 5'-terminal helix region of 16S rRNA. This Roseiflexus castenholzii (strain DSM 13941 / HLO8) protein is Ribosome-binding factor A.